We begin with the raw amino-acid sequence, 111 residues long: Cell division protein FtsB (111 aa).

At 1-3 the chain is on the cytoplasmic side; that stretch reads MRL. A helical transmembrane segment spans residues 4–21; it reads ITLFLLLLLLAIQYPLWL. The Periplasmic segment spans residues 22–111; it reads GKGGWLRVWD…PAALQPNHRH (90 aa). Positions 28–64 form a coiled coil; sequence RVWDMQKQVASQNQRNAELKQRNLKLEGEVKDLKEGT. The interval 90 to 111 is disordered; the sequence is PAPKTSETPLPPPAALQPNHRH.

It belongs to the FtsB family. Part of a complex composed of FtsB, FtsL and FtsQ.

The protein resides in the cell inner membrane. Essential cell division protein. May link together the upstream cell division proteins, which are predominantly cytoplasmic, with the downstream cell division proteins, which are predominantly periplasmic. The protein is Cell division protein FtsB of Ralstonia nicotianae (strain ATCC BAA-1114 / GMI1000) (Ralstonia solanacearum).